The primary structure comprises 513 residues: Sphingolipid C9-methyltransferase 1 (513 aa).

A run of 2 helical transmembrane segments spans residues 63–83 (FLVAALLGIPQWLSWKLGGGL) and 85–105 (TAIFLSIFTTIPVLAVIWTVM). S-adenosyl-L-methionine is bound by residues 228–229 (YT), 265–273 (LLDIGCGWG), 291–296 (TLARNQ), and 321–322 (YR).

Belongs to the CFA/CMAS family.

The protein resides in the membrane. The catalysed reaction is a (4E,8E)-4-sphinga-4,8-dienine ceramide + S-adenosyl-L-methionine = a 9-methyl-(4E,8E)-sphinga-4,8-dienine ceramide + S-adenosyl-L-homocysteine + H(+). Its pathway is lipid metabolism; sphingolipid metabolism. Its function is as follows. Catalyzes methylation of the sphingoid base component of glucosylceramides (GluCers) at the C9-position. Sphingolipid C9-methylation requires 4,8-desaturated ceramides as substrates. Glucosylceramides play important roles in the growth, differentiation and pathogenicity. The methyl group at the C9-position distinguishes fungal glucosylceramides from those of plants and animals, and may thus play a role in host-pathogen interactions enabling the host to recognize the fungal attack and initiate specific defense responses. However, C-9 methylation of GlcCers is not essential for the sensitivity of F.graminearum to plant defensins MsDef1 and RsAFP2. The sequence is that of Sphingolipid C9-methyltransferase 1 from Gibberella zeae (strain ATCC MYA-4620 / CBS 123657 / FGSC 9075 / NRRL 31084 / PH-1) (Wheat head blight fungus).